We begin with the raw amino-acid sequence, 712 residues long: Glucans biosynthesis glucosyltransferase H (712 aa).

The next 6 membrane-spanning stretches (helical) occupy residues 57 to 77, 89 to 109, 408 to 428, 462 to 482, 552 to 572, and 573 to 593; these read LAIMLATAALTCAGGYEMYQV, IVLALFAALFAWVALSFVSAL, GIGSYITAPMWLAFLVAGILI, FAGTMGLLMMPKLLALILVVI, YAAPSWLGAVMAVSALLVSWP, and LLLWMMPVILGLVLAIPVALL.

Belongs to the glycosyltransferase 2 family. OpgH subfamily.

Its subcellular location is the cell inner membrane. Its pathway is glycan metabolism; osmoregulated periplasmic glucan (OPG) biosynthesis. Its function is as follows. Involved in the biosynthesis of osmoregulated periplasmic glucans (OPGs). The chain is Glucans biosynthesis glucosyltransferase H from Rhodopseudomonas palustris (strain BisA53).